Here is a 365-residue protein sequence, read N- to C-terminus: Ubiquitin carboxyl-terminal hydrolase 4 (365 aa).

A lipid anchor (N-myristoyl glycine) is attached at Gly-2. One can recognise a USP domain in the interval 23–362 (FGFENFGNTC…HGYILLYESL (340 aa)). Residue Cys-32 is the Nucleophile of the active site. The short motif at 81-98 (KKKTGVIAPKRFVQRLKK) is the Bipartite nuclear localization signal element. His-310 serves as the catalytic Proton acceptor.

The protein belongs to the peptidase C19 family. Constitutively and ubiquitously expressed.

It localises to the nucleus. The enzyme catalyses Thiol-dependent hydrolysis of ester, thioester, amide, peptide and isopeptide bonds formed by the C-terminal Gly of ubiquitin (a 76-residue protein attached to proteins as an intracellular targeting signal).. Recognizes and hydrolyzes the peptide bond at the C-terminal Gly of ubiquitin. Involved in the processing of poly-ubiquitin precursors as well as that of ubiquitinated proteins. Required for the correct development of pollen. The polypeptide is Ubiquitin carboxyl-terminal hydrolase 4 (UBP4) (Arabidopsis thaliana (Mouse-ear cress)).